The following is a 372-amino-acid chain: Heat shock 70 kDa protein II (372 aa).

This sequence belongs to the heat shock protein 70 family.

The polypeptide is Heat shock 70 kDa protein II (HSP70II) (Paracentrotus lividus (Common sea urchin)).